The chain runs to 645 residues: Beta-galactosidase BgaA (645 aa).

Arg102 contacts substrate. Cys106 contributes to the Zn(2+) binding site. Asn140 contributes to the substrate binding site. Glu141 serves as the catalytic Proton donor. Zn(2+) contacts are provided by Cys150, Cys152, and Cys155. Glu312 functions as the Nucleophile in the catalytic mechanism. Substrate contacts are provided by residues Trp320 and 360 to 363 (EQMH).

This sequence belongs to the glycosyl hydrolase 42 family.

The catalysed reaction is Hydrolysis of terminal non-reducing beta-D-galactose residues in beta-D-galactosides.. In terms of biological role, hydrolyzes chromogen 5-bromo-4-chloro-3-indolyl-beta-D-galactopyranoside (X-Gal) and p-nitrophenyl-beta-D-galactoside (pNPGal). The sequence is that of Beta-galactosidase BgaA from Thermus sp.